Here is a 307-residue protein sequence, read N- to C-terminus: Leucine-rich repeat-containing protein 59 (307 aa).

An N-acetylmethionine modification is found at Met1. Position 2 is an N-acetylthreonine; in Leucine-rich repeat-containing protein 59, N-terminally processed (Thr2). The Cytoplasmic segment spans residues 2-244; the sequence is TKTGSKGGNL…KPPPRKHNRS (243 aa). LRR repeat units follow at residues 10-31, 40-62, 63-84, 86-107, and 109-128; these read NLRD…NEVP, KATV…CGLT, HLVK…FGRL, NLQH…FAQL, and NLKW…AKVA. Phosphoserine occurs at positions 23 and 25. Lys73 carries the N6-succinyllysine modification. Lys135 bears the N6-acetyllysine mark. The stretch at 148–216 forms a coiled coil; it reads MKAVQADQER…KASKREQEKK (69 aa). Positions 150–242 are disordered; it reads AVQADQERER…PRKPPPRKHN (93 aa). The segment covering 154–221 has biased composition (basic and acidic residues); the sequence is DQERERQRRL…EQEKKPKKET (68 aa). Positions 229 to 242 are enriched in basic residues; sequence SGSRPRKPPPRKHN. Residues 245-265 traverse the membrane as a helical segment; that stretch reads WAVLKGLLLLLLLCVAGGLVV. At 266 to 307 the chain is on the lumenal side; it reads CRVTGLQQQPLCTSVNAIYDNAVQGLRHHEILQWVLQTDSQQ.

In terms of assembly, can form homodimers. Interacts with SGO1. Interacts with FGF1.

The protein localises to the microsome membrane. Its subcellular location is the endoplasmic reticulum membrane. It is found in the nucleus envelope. In terms of biological role, required for nuclear import of FGF1, but not that of FGF2. Might regulate nuclear import of exogenous FGF1 by facilitating interaction with the nuclear import machinery and by transporting cytosolic FGF1 to, and possibly through, the nuclear pores. This Rattus norvegicus (Rat) protein is Leucine-rich repeat-containing protein 59 (Lrrc59).